Reading from the N-terminus, the 232-residue chain is Zinc finger protein RTS2 (232 aa).

A C2H2-type zinc finger spans residues Y24–H48. 2 disordered regions span residues A180 to D199 and G211 to R232.

It localises to the nucleus. This is Zinc finger protein RTS2 (RTS2) from Saccharomyces cerevisiae (strain ATCC 204508 / S288c) (Baker's yeast).